The sequence spans 298 residues: Glutamate/glycine mitochondrial carrier ymc1 (298 aa).

3 Solcar repeats span residues 14-98, 106-193, and 206-294; these read TKDF…CKRF, VTMP…LVKN, and TPGW…VSQH. A run of 6 helical transmembrane segments spans residues 17–37, 67–87, 112–132, 172–192, 212–232, and 266–287; these read FLAGVSGGVAQVLVGQPFDCV, LAAFYKGTVLPLLGIGFCVSI, YVSGAISGLANSFLVGPVEHV, TAAREAHGLGMYFLAYEALVK, CVFGAGAGYAMWLAAYPFDIV, and FYRGFVPVLVRAAPANAVTFYV.

It belongs to the mitochondrial carrier (TC 2.A.29) family.

It localises to the mitochondrion inner membrane. In terms of biological role, acts as a glutamate and glycine mitochondrial transmembrane transporter. In Schizosaccharomyces pombe (strain 972 / ATCC 24843) (Fission yeast), this protein is Glutamate/glycine mitochondrial carrier ymc1 (ymc1).